The sequence spans 101 residues: Urease subunit beta 1 (101 aa).

This sequence belongs to the urease beta subunit family. As to quaternary structure, heterotrimer of UreA (gamma), UreB (beta) and UreC (alpha) subunits. Three heterotrimers associate to form the active enzyme.

It is found in the cytoplasm. The catalysed reaction is urea + 2 H2O + H(+) = hydrogencarbonate + 2 NH4(+). It participates in nitrogen metabolism; urea degradation; CO(2) and NH(3) from urea (urease route): step 1/1. Disruption of the ure1 gene cluster suggests that it protects brucellae during their passage through the stomach. The major route of infection in human brucellosis is oral. This is Urease subunit beta 1 from Brucella abortus (strain 2308).